A 346-amino-acid chain; its full sequence is Dihydroorotase (346 aa).

Residues His-14 and His-16 each contribute to the Zn(2+) site. Substrate is bound by residues 16-18 (HLR) and Asn-42. The Zn(2+) site is built by Lys-100, His-137, and His-175. Lys-100 carries the N6-carboxylysine modification. His-137 is a substrate binding site. Residue Leu-220 participates in substrate binding. Zn(2+) is bound at residue Asp-248. The active site involves Asp-248. The substrate site is built by His-252 and Ala-264.

It belongs to the metallo-dependent hydrolases superfamily. DHOase family. Class II DHOase subfamily. As to quaternary structure, homodimer. It depends on Zn(2+) as a cofactor.

It carries out the reaction (S)-dihydroorotate + H2O = N-carbamoyl-L-aspartate + H(+). Its pathway is pyrimidine metabolism; UMP biosynthesis via de novo pathway; (S)-dihydroorotate from bicarbonate: step 3/3. In terms of biological role, catalyzes the reversible cyclization of carbamoyl aspartate to dihydroorotate. This chain is Dihydroorotase, found in Ruegeria pomeroyi (strain ATCC 700808 / DSM 15171 / DSS-3) (Silicibacter pomeroyi).